A 229-amino-acid chain; its full sequence is DNA mismatch repair protein MutH (229 aa).

Belongs to the MutH family.

Its subcellular location is the cytoplasm. Functionally, sequence-specific endonuclease that cleaves unmethylated GATC sequences. It is involved in DNA mismatch repair. In Escherichia coli (strain SMS-3-5 / SECEC), this protein is DNA mismatch repair protein MutH.